The chain runs to 349 residues: CCN family member 2 (349 aa).

Residues 1-26 form the signal peptide; sequence MSATGLSPVRCAFVLLLALCSRPASG. The IGFBP N-terminal domain occupies 27–98; it reads QDCSGQCQCA…NRKIGVCTAK (72 aa). Intrachain disulfides connect Cys-29/Cys-54, Cys-33/Cys-56, Cys-35/Cys-57, Cys-43/Cys-60, Cys-68/Cys-82, and Cys-74/Cys-95. The 67-residue stretch at 101–167 folds into the VWFC domain; it reads APCVFGGTVY…GKCCEEWVCD (67 aa). The region spanning 198–243 is the TSP type-1 domain; it reads NCLVQTTEWSACSKTCGMGISTRVTNDNAFCRLEKQSRLCMVRPCE. The heparin-binding stretch occupies residues 247-349; it reads EENIKKGKKC…YYRKMYGDMA (103 aa). 5 cysteine pairs are disulfide-bonded: Cys-256–Cys-293, Cys-273–Cys-307, Cys-284–Cys-323, Cys-287–Cys-325, and Cys-292–Cys-329. Residues 256–330 enclose the CTCK domain; it reads CIRTPKISKP…KTCACHYNCP (75 aa).

This sequence belongs to the CCN family. As to quaternary structure, monomer. Interacts with TSKU.

The protein resides in the secreted. It localises to the extracellular space. The protein localises to the extracellular matrix. Major connective tissue mitoattractant secreted by vascular endothelial cells. Promotes proliferation and differentiation of chondrocytes. Is involved in the stimulation of osteoblast differentiation and has a critical role in osteogenesis. Mediates heparin- and divalent cation-dependent cell adhesion in many cell types including fibroblasts, myofibroblasts, endothelial and epithelial cells. Enhances fibroblast growth factor-induced DNA synthesis. This Sus scrofa (Pig) protein is CCN family member 2 (CCN2).